Consider the following 448-residue polypeptide: Phosphoglucosamine mutase (448 aa).

The active-site Phosphoserine intermediate is the serine 89. Residues serine 89, aspartate 232, aspartate 234, and aspartate 236 each coordinate Mg(2+). Serine 89 carries the phosphoserine modification.

It belongs to the phosphohexose mutase family. Forms large aggregates. Mg(2+) is required as a cofactor. Post-translationally, activated by phosphorylation.

It catalyses the reaction alpha-D-glucosamine 1-phosphate = D-glucosamine 6-phosphate. Catalyzes the conversion of glucosamine-6-phosphate to glucosamine-1-phosphate. This chain is Phosphoglucosamine mutase (glmM), found in Methanocaldococcus jannaschii (strain ATCC 43067 / DSM 2661 / JAL-1 / JCM 10045 / NBRC 100440) (Methanococcus jannaschii).